The sequence spans 1654 residues: MTTSNVELIPIYTDWANRHLSKGSLSKSIRDISNDFRDYRLVSQLINVIVPINEFSPAFTKRLAKITSNLDGLETCLDYLKNLGLDCSKLTKTDIDSGNLGAVLQLLFLLSTYKQKLRQLKKDQKKLEQLPTSIMPPAVSKLPSPRVATSATASATNPNSNFPQMSTSRLQTPQSRISKIDSSKIGIKPKTSGLKPPSSSTTSSNNTNSFRPSSRSSGNNNVGSTISTSAKSLESSSTYSSISNLNRPTSQLQKPSRPQTQLVRVATTTKIGSSKLAAPKAVSTPKLASVKTIGAKQEPDNSGGGGGGMLKLKLFSSKNPSSSSNSPQPTRKAAAVPQQQTLSKIAAPVKSGLKPPTSKLGSATSMSKLCTPKVSYRKTDAPIISQQDSKRCSKSSEEESGYAGFNSTSPTSSSTEGSLSMHSTSSKSSTSDEKSPSSDDLTLNASIVTAIRQPIAATPVSPNIINKPVEEKPTLAVKGVKSTAKKDPPPAVPPRDTQPTIGVVSPIMAHKKLTNDPVISEKPEPEKLQSMSIDTTDVPPLPPLKSVVPLKMTSIRQPPTYDVLLKQGKITSPVKSFGYEQSSASEDSIVAHASAQVTPPTKTSGNHSLERRMGKNKTSESSGYTSDAGVAMCAKMREKLKEYDDMTRRAQNGYPDNFEDSSSLSSGISDNNELDDISTDDLSGVDMATVASKHSDYSHFVRHPTSSSSKPRVPSRSSTSVDSRSRAEQENVYKLLSQCRTSQRGAAATSTFGQHSLRSPGYSSYSPHLSVSADKDTMSMHSQTSRRPSSQKPSYSGQFHSLDRKCHLQEFTSTEHRMAALLSPRRVPNSMSKYDSSAAALNASGMSRSMILLESLSPRPPRRHQSPADSCIITASPSAPRRSHSPRGPTARIPLSLASSPVHVNNNWGSYSARSRGGSSTGIYGETFQLHRLSDEKSPAHSAKSEMGSQLSLASTTAYGSLNEKYEHAIRDMARDLECYKNTVDSLTKKQENYGALFDLFEQKLRKLTQHIDRSNLKPEEAIRFRQDIAHLRDISNHLASNSAHANEGAGELLRQPSLESVASHRSSMSSSSKSSKQEKISLSSFGKNKKSWIRSSLSKFTKKKNKNYDEAHMPSISGSQGTLDNIDVIELKQELKERDSALYEVRLDNLDRAREVDVLRETVNKLKTENKQLKKEVDKLTNGPATRASSRASIPVIYDDEHVYDAACSSTSASQSSKRSSGCNSIKVTVNVDIAGEISSIVNPDKEIIVGYLAMPTSQSCWKDIDVSILGLFEVYLSRIDVEHQLGIDARDSILGYQIGELRRVIGDSTTMITSHPTDILTSSTTIRMFMHGAAQSRVDSLVLDMLLPKQMILQLVKSILTERRLVLAGATGIGKSKLAKTLAAYVSIRTNQSEDSIVNISIPENNKEELLQVERRLEKILRSKESCIVILDNIPKNRIAFVVSVFANVPLQNNEGPFVVCTVNRYQIPELQIHHNFKMSVMSNRLEGFILRYLRRRAVEDEYRLTVQMPSELFKIIDFFPIALQAVNNFIEKTNSVDVTVGPRACLNCPLTVDGSREWFIRLWNENFIPYLERVARDGKKTFGRCTSFEDPTDIVSEKWPWFDGENPENVLKRLQLQDLVPSPANSSRQHFNPLESLIQLHATKHQTIDNI.

Residues valine 6–glutamine 115 enclose the Calponin-homology (CH) domain. Disordered regions lie at residues glutamate 128–glutamine 261, serine 274–threonine 364, alanine 381–aspartate 440, valine 480–isoleucine 501, alanine 595–serine 626, alanine 650–aspartate 680, serine 698–glutamine 729, and alanine 747–phenylalanine 799. Residues proline 143–asparagine 161 show a composition bias toward low complexity. Residues phenylalanine 162 to glutamine 174 show a composition bias toward polar residues. The segment covering proline 197–serine 243 has biased composition (low complexity). Residues asparagine 244–glutamine 261 are compositionally biased toward polar residues. The span at leucine 310 to proline 327 shows a compositional bias: low complexity. Positions aspartate 388–glutamate 397 are enriched in basic and acidic residues. Residues serine 407–serine 429 show a composition bias toward low complexity. Positions alanine 595–histidine 607 are enriched in polar residues. Residues threonine 705–aspartate 722 are compositionally biased toward low complexity. Composition is skewed to polar residues over residues alanine 747 to leucine 769 and serine 779 to phenylalanine 799. A coiled-coil region spans residues leucine 962–tyrosine 994. The disordered stretch occupies residues leucine 1059–leucine 1083. Residues serine 1061–leucine 1083 are compositionally biased toward low complexity. Residues aspartate 1152 to glycine 1184 adopt a coiled-coil conformation.

The protein belongs to the Nav/unc-53 family. As to quaternary structure, interacts with sem-5. Interacts with cmd-1 in the presence of Ca(2+).

In terms of biological role, involved in the migration and outgrowth of muscles, axons and excretory canals. This is Adapter protein unc-53 (unc-53) from Caenorhabditis elegans.